The chain runs to 78 residues: Large ribosomal subunit protein eL38 (78 aa).

This sequence belongs to the eukaryotic ribosomal protein eL38 family. As to quaternary structure, component of the large ribosomal subunit (LSU). Mature yeast ribosomes consist of a small (40S) and a large (60S) subunit. The 40S small subunit contains 1 molecule of ribosomal RNA (18S rRNA) and 33 different proteins (encoded by 57 genes). The large 60S subunit contains 3 rRNA molecules (25S, 5.8S and 5S rRNA) and 46 different proteins (encoded by 81 genes).

The protein localises to the cytoplasm. Component of the ribosome, a large ribonucleoprotein complex responsible for the synthesis of proteins in the cell. The small ribosomal subunit (SSU) binds messenger RNAs (mRNAs) and translates the encoded message by selecting cognate aminoacyl-transfer RNA (tRNA) molecules. The large subunit (LSU) contains the ribosomal catalytic site termed the peptidyl transferase center (PTC), which catalyzes the formation of peptide bonds, thereby polymerizing the amino acids delivered by tRNAs into a polypeptide chain. The nascent polypeptides leave the ribosome through a tunnel in the LSU and interact with protein factors that function in enzymatic processing, targeting, and the membrane insertion of nascent chains at the exit of the ribosomal tunnel. This is Large ribosomal subunit protein eL38 from Saccharomyces cerevisiae (strain ATCC 204508 / S288c) (Baker's yeast).